The sequence spans 264 residues: Undecaprenyl-diphosphatase (264 aa).

Transmembrane regions (helical) follow at residues Asn41–Trp61, Tyr82–Asp102, Ala106–Leu126, Ile140–Leu160, Ile213–Cys233, and Lys244–Leu264.

This sequence belongs to the UppP family.

It localises to the cell inner membrane. It catalyses the reaction di-trans,octa-cis-undecaprenyl diphosphate + H2O = di-trans,octa-cis-undecaprenyl phosphate + phosphate + H(+). Functionally, catalyzes the dephosphorylation of undecaprenyl diphosphate (UPP). Confers resistance to bacitracin. This chain is Undecaprenyl-diphosphatase, found in Bacteroides thetaiotaomicron (strain ATCC 29148 / DSM 2079 / JCM 5827 / CCUG 10774 / NCTC 10582 / VPI-5482 / E50).